The chain runs to 197 residues: Imidazoleglycerol-phosphate dehydratase (197 aa).

It belongs to the imidazoleglycerol-phosphate dehydratase family.

The protein resides in the cytoplasm. It carries out the reaction D-erythro-1-(imidazol-4-yl)glycerol 3-phosphate = 3-(imidazol-4-yl)-2-oxopropyl phosphate + H2O. It functions in the pathway amino-acid biosynthesis; L-histidine biosynthesis; L-histidine from 5-phospho-alpha-D-ribose 1-diphosphate: step 6/9. This is Imidazoleglycerol-phosphate dehydratase from Pseudomonas entomophila (strain L48).